The following is a 375-amino-acid chain: Queuine tRNA-ribosyltransferase (375 aa).

Asp-94 (proton acceptor) is an active-site residue. Residues 94-98 (DSGGF), Asp-148, Gln-191, and Gly-218 contribute to the substrate site. The tract at residues 249-255 (GVGSPDD) is RNA binding. Asp-268 serves as the catalytic Nucleophile. Residues 273 to 277 (TRIAR) form an RNA binding; important for wobble base 34 recognition region. The Zn(2+) site is built by Cys-306, Cys-308, Cys-311, and His-337.

Belongs to the queuine tRNA-ribosyltransferase family. In terms of assembly, homodimer. Within each dimer, one monomer is responsible for RNA recognition and catalysis, while the other monomer binds to the replacement base PreQ1. It depends on Zn(2+) as a cofactor.

The catalysed reaction is 7-aminomethyl-7-carbaguanine + guanosine(34) in tRNA = 7-aminomethyl-7-carbaguanosine(34) in tRNA + guanine. It functions in the pathway tRNA modification; tRNA-queuosine biosynthesis. Catalyzes the base-exchange of a guanine (G) residue with the queuine precursor 7-aminomethyl-7-deazaguanine (PreQ1) at position 34 (anticodon wobble position) in tRNAs with GU(N) anticodons (tRNA-Asp, -Asn, -His and -Tyr). Catalysis occurs through a double-displacement mechanism. The nucleophile active site attacks the C1' of nucleotide 34 to detach the guanine base from the RNA, forming a covalent enzyme-RNA intermediate. The proton acceptor active site deprotonates the incoming PreQ1, allowing a nucleophilic attack on the C1' of the ribose to form the product. After dissociation, two additional enzymatic reactions on the tRNA convert PreQ1 to queuine (Q), resulting in the hypermodified nucleoside queuosine (7-(((4,5-cis-dihydroxy-2-cyclopenten-1-yl)amino)methyl)-7-deazaguanosine). The sequence is that of Queuine tRNA-ribosyltransferase from Thermoanaerobacter pseudethanolicus (strain ATCC 33223 / 39E) (Clostridium thermohydrosulfuricum).